The primary structure comprises 115 residues: Large ribosomal subunit protein bL20 (115 aa).

Belongs to the bacterial ribosomal protein bL20 family.

Binds directly to 23S ribosomal RNA and is necessary for the in vitro assembly process of the 50S ribosomal subunit. It is not involved in the protein synthesizing functions of that subunit. The chain is Large ribosomal subunit protein bL20 from Synechococcus sp. (strain CC9605).